The sequence spans 386 residues: Terpene cyclase 6 (386 aa).

Residues Asp128, Asn276, and Ser280 each coordinate Mg(2+). Positions 128–132 (DDEID) match the D(D/E)XX(D/E) motif motif. The short motif at 276-284 (NEILSLQKE) is the NSE motif element. The WxxxxxRY motif signature appears at 360–367 (WSYNCERY). Residues Arg366 and Tyr367 each contribute to the (2E,6E)-farnesyl diphosphate site.

The protein belongs to the terpene synthase family. As to quaternary structure, homodimer. The cofactor is Mg(2+).

It catalyses the reaction (2E,6E)-farnesyl diphosphate + H2O = trichobrasilenol + diphosphate. The enzyme catalyses (2E,6E)-farnesyl diphosphate = alpha-humulene + diphosphate. It carries out the reaction (2E,6E)-farnesyl diphosphate = (-)-(E)-beta-caryophyllene + diphosphate. The catalysed reaction is (2E,6E)-farnesyl diphosphate = (E)-2-epi-beta-caryophyllene + diphosphate. It catalyses the reaction (2E,6E)-farnesyl diphosphate + H2O = (+)-isoafricanol + diphosphate. The enzyme catalyses (2E,6E)-farnesyl diphosphate + H2O = (+)-(2S,3R,9R)-pristinol + diphosphate. It carries out the reaction (2E,6E)-farnesyl diphosphate = african-3-ene + diphosphate. The catalysed reaction is (2E,6E)-farnesyl diphosphate = african-1-ene + diphosphate. Its pathway is sesquiterpene biosynthesis. Functionally, terpene cyclase that is able to convert FPP into a mixture of sesquiterpene hydrocarbons and alcohols. The main product is trichobrasilenol. Additionally, side products include alpha-humulene, caryophyllene, 2-epi-caryophyllene, african-3-ene, african-1-ene, isoafricanol and pristinol. Does not accept GPP, GGPP, and GFPP as substrates. This is Terpene cyclase 6 from Hypocrea atroviridis (Trichoderma atroviride).